A 249-amino-acid chain; its full sequence is MAYATSTYARTSCIILPKIQNGAHFTDDTKAFRRITARRVTRIYASQGPTKPSKPSPGVDTRIHWESPDEGWIGGRSDPAKSVDEDKTNLLSDEKFAELIKDSFDSHYQFLGVSTDADLEEIKSAYRRLSKEYHPDTTSLPLKTASEKFMKLREVYNVLSDEETRRFYDWTLAQEVASRQAEKMRMKLEDPKEQDFRGYESIPDMVDRLGGRNMELSDQAMTALTFDILIVLFAVCCIAFVIVFKDPSY.

A chloroplast-targeting transit peptide spans 1–45 (MAYATSTYARTSCIILPKIQNGAHFTDDTKAFRRITARRVTRIYA). The segment at 44–84 (YASQGPTKPSKPSPGVDTRIHWESPDEGWIGGRSDPAKSVD) is disordered. Residues 106-172 (SHYQFLGVST…ETRRFYDWTL (67 aa)) enclose the J domain. Residues 224–244 (LTFDILIVLFAVCCIAFVIVF) form a helical membrane-spanning segment.

In terms of assembly, part of the chloroplast NDH complex, composed of a mixture of chloroplast and nucleus encoded subunits. Component of the electron donor-binding subcomplex, at least composed of NDHS, NDHT and NDHU.

It localises to the plastid. It is found in the chloroplast thylakoid membrane. The catalysed reaction is a plastoquinone + NADH + (n+1) H(+)(in) = a plastoquinol + NAD(+) + n H(+)(out). The enzyme catalyses a plastoquinone + NADPH + (n+1) H(+)(in) = a plastoquinol + NADP(+) + n H(+)(out). In terms of biological role, NDH shuttles electrons from NAD(P)H:plastoquinone, via FMN and iron-sulfur (Fe-S) centers, to quinones in the photosynthetic chain and possibly in a chloroplast respiratory chain. The immediate electron acceptor for the enzyme in this species is believed to be plastoquinone. Couples the redox reaction to proton translocation, and thus conserves the redox energy in a proton gradient. Required for the accumulation of both the NDH subcomplex A and NDHS. The polypeptide is NAD(P)H-quinone oxidoreductase subunit T, chloroplastic (Arabidopsis thaliana (Mouse-ear cress)).